The following is a 148-amino-acid chain: UPF0178 protein Mlg_1612 (148 aa).

The protein belongs to the UPF0178 family.

The protein is UPF0178 protein Mlg_1612 of Alkalilimnicola ehrlichii (strain ATCC BAA-1101 / DSM 17681 / MLHE-1).